Consider the following 309-residue polypeptide: Ketosamine-3-kinase (309 aa).

Serine 20 carries the post-translational modification Phosphoserine. 89–91 (EHL) contacts ATP. Residue aspartate 217 is the Proton acceptor of the active site.

The protein belongs to the fructosamine kinase family.

It carries out the reaction N(6)-D-ribulosyl-L-lysyl-[protein] + ATP = N(6)-(3-O-phospho-D-ribulosyl)-L-lysyl-[protein] + ADP + H(+). The catalysed reaction is N(6)-(D-psicosyl)-L-lysyl-[protein] + ATP = N(6)-(3-O-phospho-D-psicosyl)-L-lysyl-[protein] + ADP + H(+). Its function is as follows. Ketosamine-3-kinase involved in protein deglycation by mediating phosphorylation of ribuloselysine and psicoselysine on glycated proteins, to generate ribuloselysine-3 phosphate and psicoselysine-3 phosphate, respectively. Ribuloselysine-3 phosphate and psicoselysine-3 phosphate adducts are unstable and decompose under physiological conditions. Not able to phosphorylate fructoselysine. This is Ketosamine-3-kinase from Mus musculus (Mouse).